A 449-amino-acid chain; its full sequence is Putative F-box/LRR-repeat protein 23 (449 aa).

2 LRR repeats span residues 14-37 (KLWR…HLKL) and 39-64 (GNGL…DLRR). An F-box domain is found at 178–225 (LRNWAELPSKLTSSILLRLGAIEILQNAQKVCKPWHRVCKDPSMWRKI). LRR repeat units follow at residues 261–286 (WYYG…GLVR), 287–311 (CFPI…LEVS), 312–337 (YCLF…KLNR), 344–367 (SNSG…HLQL), 369–394 (GNGL…DLRQ), and 401–427 (VGDL…DSDD).

The sequence is that of Putative F-box/LRR-repeat protein 23 (FBL23) from Arabidopsis thaliana (Mouse-ear cress).